The sequence spans 261 residues: Endomucin (261 aa).

Positions 1-18 (MELLQVTILFLLPSICSS) are cleaved as a signal peptide. N-linked (GlcNAc...) asparagine glycosylation is found at asparagine 19, asparagine 28, asparagine 98, and asparagine 104. At 19-190 (NSTGVLEAAN…TSATSRSYSS (172 aa)) the chain is on the extracellular side. 2 stretches are compositionally biased toward polar residues: residues 118-134 (TLQS…SIKT) and 146-171 (ASPS…SQVI). The tract at residues 118–183 (TLQSSKPKTE…EGGKNASTSA (66 aa)) is disordered. N-linked (GlcNAc...) asparagine glycans are attached at residues asparagine 164 and asparagine 178. Residues 191–211 (IILPVVIALIVITLSVFVLVG) form a helical membrane-spanning segment. At 212-261 (LYRMCWKADPGTPENGNDQPQSDKESVKLLTVKTISHESGEHSAQGKTKN) the chain is on the cytoplasmic side. Residue serine 237 is modified to Phosphoserine.

In terms of processing, highly O-glycosylated. Sialic acid-rich glycoprotein. Expressed in heart, kidney and lung.

Its subcellular location is the cell membrane. It is found in the membrane. The protein localises to the secreted. Functionally, endothelial sialomucin, also called endomucin or mucin-like sialoglycoprotein, which interferes with the assembly of focal adhesion complexes and inhibits interaction between cells and the extracellular matrix. The protein is Endomucin (EMCN) of Homo sapiens (Human).